We begin with the raw amino-acid sequence, 249 residues long: Exosome complex component Rrp4 (249 aa).

Residues 72-143 enclose the S1 motif domain; it reads GDTIIGLVED…RTISPVLTVK (72 aa). The region spanning 151–213 is the KH domain; sequence PLGTVMDIMP…EALIEAINII (63 aa).

This sequence belongs to the RRP4 family. In terms of assembly, component of the archaeal exosome complex. Forms a trimer of Rrp4 and/or Csl4 subunits. The trimer associates with a hexameric ring-like arrangement composed of 3 Rrp41-Rrp42 heterodimers.

Its subcellular location is the cytoplasm. Non-catalytic component of the exosome, which is a complex involved in RNA degradation. Increases the RNA binding and the efficiency of RNA degradation. Confers strong poly(A) specificity to the exosome. The protein is Exosome complex component Rrp4 of Sulfolobus acidocaldarius (strain ATCC 33909 / DSM 639 / JCM 8929 / NBRC 15157 / NCIMB 11770).